The chain runs to 163 residues: Putative pre-16S rRNA nuclease (163 aa).

It belongs to the YqgF nuclease family.

Its subcellular location is the cytoplasm. Functionally, could be a nuclease involved in processing of the 5'-end of pre-16S rRNA. In Chlamydia caviae (strain ATCC VR-813 / DSM 19441 / 03DC25 / GPIC) (Chlamydophila caviae), this protein is Putative pre-16S rRNA nuclease.